We begin with the raw amino-acid sequence, 252 residues long: Imidazole glycerol phosphate synthase subunit HisF (252 aa).

Active-site residues include D11 and D130.

This sequence belongs to the HisA/HisF family. Heterodimer of HisH and HisF.

It is found in the cytoplasm. The enzyme catalyses 5-[(5-phospho-1-deoxy-D-ribulos-1-ylimino)methylamino]-1-(5-phospho-beta-D-ribosyl)imidazole-4-carboxamide + L-glutamine = D-erythro-1-(imidazol-4-yl)glycerol 3-phosphate + 5-amino-1-(5-phospho-beta-D-ribosyl)imidazole-4-carboxamide + L-glutamate + H(+). Its pathway is amino-acid biosynthesis; L-histidine biosynthesis; L-histidine from 5-phospho-alpha-D-ribose 1-diphosphate: step 5/9. In terms of biological role, IGPS catalyzes the conversion of PRFAR and glutamine to IGP, AICAR and glutamate. The HisF subunit catalyzes the cyclization activity that produces IGP and AICAR from PRFAR using the ammonia provided by the HisH subunit. This is Imidazole glycerol phosphate synthase subunit HisF from Rhodospirillum rubrum (strain ATCC 11170 / ATH 1.1.1 / DSM 467 / LMG 4362 / NCIMB 8255 / S1).